We begin with the raw amino-acid sequence, 88 residues long: U2-ctenitoxin-Pn1a (88 aa).

Residues 1 to 17 (MKVAILILSILVLAVAS) form the signal peptide. Residues 18–34 (ETIEEYRDDFAVEELER) constitute a propeptide that is removed on maturation. Intrachain disulfides connect C37-C51, C44-C57, C48-C86, C50-C71, and C59-C69. K88 is a propeptide.

Expressed by the venom gland.

The protein localises to the secreted. Its function is as follows. Inhibits voltage-gated sodium channels (Nav). Causes scratching, lacrimation, hypersalivation, sweating and agitation followed by spastic paralysis of the anterior and posterior extremities and death at dose levels of 1.62 mg/mouse. Insecticidal to the larval and adult forms of the house fly. The sequence is that of U2-ctenitoxin-Pn1a from Phoneutria nigriventer (Brazilian armed spider).